The sequence spans 236 residues: uncharacterized protein (236 aa).

This sequence belongs to the RHS family.

This is an uncharacterized protein from Escherichia coli (strain K12).